Consider the following 260-residue polypeptide: Thiazole synthase (260 aa).

The active-site Schiff-base intermediate with DXP is the Lys-102. Residues Gly-163, Ala-189 to Gly-190, and Asn-211 to Thr-212 each bind 1-deoxy-D-xylulose 5-phosphate.

This sequence belongs to the ThiG family. As to quaternary structure, homotetramer. Forms heterodimers with either ThiH or ThiS.

It is found in the cytoplasm. The enzyme catalyses [ThiS sulfur-carrier protein]-C-terminal-Gly-aminoethanethioate + 2-iminoacetate + 1-deoxy-D-xylulose 5-phosphate = [ThiS sulfur-carrier protein]-C-terminal Gly-Gly + 2-[(2R,5Z)-2-carboxy-4-methylthiazol-5(2H)-ylidene]ethyl phosphate + 2 H2O + H(+). It functions in the pathway cofactor biosynthesis; thiamine diphosphate biosynthesis. Functionally, catalyzes the rearrangement of 1-deoxy-D-xylulose 5-phosphate (DXP) to produce the thiazole phosphate moiety of thiamine. Sulfur is provided by the thiocarboxylate moiety of the carrier protein ThiS. In vitro, sulfur can be provided by H(2)S. The polypeptide is Thiazole synthase (Geobacter sp. (strain M21)).